We begin with the raw amino-acid sequence, 441 residues long: Interferon-related developmental regulator 2 (441 aa).

Residues 1–15 (MPRARKGNTPRKGGQ) are compositionally biased toward basic residues. A disordered region spans residues 1–72 (MPRARKGNTP…TVDEQGPQED (72 aa)). Residues 63–72 (TVDEQGPQED) show a composition bias toward acidic residues.

The protein belongs to the IFRD family. Associates with ribosomes; promoting ribosome inactivation.

Its function is as follows. Ribosome-binding protein that acts as an inhibitor of mRNA translation by promoting ribosome inactivation. Associates with the P- and E-sites of the ribosome and inserts a C-terminal helix into the mRNA exit channel to preclude translation. The polypeptide is Interferon-related developmental regulator 2 (Oryctolagus cuniculus (Rabbit)).